The chain runs to 358 residues: MAISPEKEKALAAALSQIDRQFGKGAIMRMSDQRLSIEAIPTGSIALDLALGVGGIPRGRVIEIYGPESSGKTTLTQHIVAETQKMGGVAAFIDAEHAFDPVYAANCGVNVEDLLVSQPDTGEQALEICETLVRSGAIDVIVVDSVAALVPRAEIEGDMGDSHVGLQARLMSQALRKLSGAVSKSRTALIFINQLRMKIGVMFGNPETTTGGNALKFYASVRLDIRKVESIKQGQDVTGARARVKVVKNKVAPPFRQAEFDIMYNEGISREGNIVDVGVTMEILRKSGAWFYLGDDRLGQGRENAKQFLKDNPALADEIEKMIRAASPGAPTAKVIVGAAAANGAAPADDGDGIFDDE.

Position 66–73 (66–73 (GPESSGKT)) interacts with ATP.

The protein belongs to the RecA family.

The protein localises to the cytoplasm. Can catalyze the hydrolysis of ATP in the presence of single-stranded DNA, the ATP-dependent uptake of single-stranded DNA by duplex DNA, and the ATP-dependent hybridization of homologous single-stranded DNAs. It interacts with LexA causing its activation and leading to its autocatalytic cleavage. In Herpetosiphon aurantiacus (strain ATCC 23779 / DSM 785 / 114-95), this protein is Protein RecA.